Reading from the N-terminus, the 552-residue chain is HTH-type transcriptional regulator SgrR (552 aa).

One can recognise an HTH marR-type domain in the interval Met-1–Arg-116. Residues Leu-26–Asp-49 constitute a DNA-binding region (H-T-H motif). The segment at Glu-163–Trp-492 is solute-binding.

Functionally, activates the small RNA gene sgrS under glucose-phosphate stress conditions as well as yfdZ. Represses its own transcription under both stress and non-stress conditions. Might act as a sensor of the intracellular accumulation of phosphoglucose by binding these molecules in its C-terminal solute-binding domain. The polypeptide is HTH-type transcriptional regulator SgrR (Shigella dysenteriae serotype 1 (strain Sd197)).